Consider the following 301-residue polypeptide: Probable alpha-L-glutamate ligase 2 (301 aa).

Residues 104–287 (MQLLSRKGIG…VASMIIEFIV (184 aa)) enclose the ATP-grasp domain. ATP is bound by residues K141, 178 to 179 (EY), D187, and 211 to 213 (RSN). Mg(2+) contacts are provided by D248, E260, and N262. Mn(2+) contacts are provided by D248, E260, and N262.

The protein belongs to the RimK family. Mg(2+) is required as a cofactor. The cofactor is Mn(2+).

This Pseudoalteromonas atlantica (strain T6c / ATCC BAA-1087) protein is Probable alpha-L-glutamate ligase 2.